The primary structure comprises 310 residues: Ferredoxin--NADP reductase (310 aa).

7 residues coordinate FAD: Asp26, Gln34, Tyr39, Val78, Phe108, Asp268, and Thr308.

This sequence belongs to the ferredoxin--NADP reductase type 2 family. In terms of assembly, homodimer. The cofactor is FAD.

It catalyses the reaction 2 reduced [2Fe-2S]-[ferredoxin] + NADP(+) + H(+) = 2 oxidized [2Fe-2S]-[ferredoxin] + NADPH. The protein is Ferredoxin--NADP reductase of Lactobacillus helveticus (strain DPC 4571).